Consider the following 364-residue polypeptide: Uroporphyrinogen decarboxylase (364 aa).

Residues 28-32 (RQAGR), Asp-78, Tyr-160, Thr-215, and His-333 each bind substrate.

This sequence belongs to the uroporphyrinogen decarboxylase family. In terms of assembly, homodimer.

Its subcellular location is the cytoplasm. The catalysed reaction is uroporphyrinogen III + 4 H(+) = coproporphyrinogen III + 4 CO2. Its pathway is porphyrin-containing compound metabolism; protoporphyrin-IX biosynthesis; coproporphyrinogen-III from 5-aminolevulinate: step 4/4. Functionally, catalyzes the decarboxylation of four acetate groups of uroporphyrinogen-III to yield coproporphyrinogen-III. The protein is Uroporphyrinogen decarboxylase of Burkholderia pseudomallei (strain 1106a).